The chain runs to 117 residues: VKVPEPFAWNESFATSYKNIDLEHRTLFNGLFALSEFNTRDQLLACKEVFVMHFRDEQGQMEKANYEHFEEHRGIHEGFLEKMGHWKAPVAQKDIKFGMEWLVNHIPTEDFKYKGKL.

The Fe cation site is built by His24, His53, Glu57, His72, His76, His105, and Asp110.

The protein belongs to the hemerythrin family. As to quaternary structure, octamer composed of two types of chains: alpha and beta.

Its function is as follows. Hemerythrin is a respiratory protein in blood cells of certain marine worms. The oxygen-binding site in each chain contains two iron atoms. This chain is Hemerythrin subunit alpha, found in Lingula anatina (Brachiopod).